A 276-amino-acid polypeptide reads, in one-letter code: Phosducin-like protein 1 (276 aa).

A phosphoserine mark is found at Ser-18, Ser-19, Ser-20, and Ser-42. The segment at 18–74 (SSSEGEDNGDEGGDNKGASGKSRCSGLTIDTNPDATPAGGFRQQSSTNTGPKGVVKD) is disordered. The Phosducin domain maps to 62–272 (SSTNTGPKGV…LIEHGIIVDR (211 aa)). Residues 153–276 (FGQVQQLTSH…GIIVDRALYN (124 aa)) are thioredoxin fold.

The protein belongs to the phosducin family. In terms of assembly, forms a complex with the beta and gamma subunits of the GTP-binding proteins. Interacts with the CCT chaperonin complex.

Its function is as follows. Functions as a co-chaperone for CCT in the assembly of heterotrimeric G protein complexes, facilitates the assembly of both Gbeta-Ggamma and RGS-Gbeta5 heterodimers. The sequence is that of Phosducin-like protein 1 from Drosophila melanogaster (Fruit fly).